The sequence spans 534 residues: Major facilitator-type transporter sor6 (534 aa).

Residues Asn29 and Asn36 are each glycosylated (N-linked (GlcNAc...) asparagine). A run of 12 helical transmembrane segments spans residues 66–86, 103–123, 160–180, 182–202, 209–229, 241–261, 318–338, 354–374, 395–415, 424–444, 456–476, and 486–506; these read WFLT…SSAY, LFIT…AVWG, AMVA…LIVL, FLAG…IADL, GLAM…GPIV, WVQG…VIFV, IVLI…MFLG, FGGL…GYAI, LPPA…FAWT, VSIV…LPIV, ASVL…FPLF, and IHWA…FPFF.

Belongs to the major facilitator superfamily. Sugar transporter (TC 2.A.1.1) family.

It is found in the membrane. Its function is as follows. Major facilitator-type transporter; part of the gene cluster that mediates the biosynthesis of sorbicillinoids, a diverse group of yellow secondary metabolites that restrict growth of competing pathogenic fungi but not of bacteria. This is Major facilitator-type transporter sor6 from Hypocrea jecorina (strain QM6a) (Trichoderma reesei).